Reading from the N-terminus, the 879-residue chain is Bifunctional uridylyltransferase/uridylyl-removing enzyme (879 aa).

The tract at residues 1-340 is uridylyltransferase; the sequence is MANVQEDKDF…GTQDLQHAEH (340 aa). A uridylyl-removing region spans residues 341-700; that stretch reads ISDDFAVANK…IGDENNYGTT (360 aa). The HD domain occupies 458–580; sequence VDEHTFRLVR…VSTPERLDYL (123 aa). ACT domains lie at 701 to 782 and 809 to 879; these read ELFI…STKR and TFEL…DLEF.

The protein belongs to the GlnD family. Mg(2+) is required as a cofactor.

It carries out the reaction [protein-PII]-L-tyrosine + UTP = [protein-PII]-uridylyl-L-tyrosine + diphosphate. The catalysed reaction is [protein-PII]-uridylyl-L-tyrosine + H2O = [protein-PII]-L-tyrosine + UMP + H(+). Its activity is regulated as follows. Uridylyltransferase (UTase) activity is inhibited by glutamine, while glutamine activates uridylyl-removing (UR) activity. Functionally, modifies, by uridylylation and deuridylylation, the PII regulatory proteins (GlnB and homologs), in response to the nitrogen status of the cell that GlnD senses through the glutamine level. Under low glutamine levels, catalyzes the conversion of the PII proteins and UTP to PII-UMP and PPi, while under higher glutamine levels, GlnD hydrolyzes PII-UMP to PII and UMP (deuridylylation). Thus, controls uridylylation state and activity of the PII proteins, and plays an important role in the regulation of nitrogen assimilation and metabolism. The protein is Bifunctional uridylyltransferase/uridylyl-removing enzyme of Idiomarina loihiensis (strain ATCC BAA-735 / DSM 15497 / L2-TR).